The primary structure comprises 949 residues: Glycine dehydrogenase (decarboxylating) (949 aa).

An N6-(pyridoxal phosphate)lysine modification is found at Lys-699.

The protein belongs to the GcvP family. The glycine cleavage system is composed of four proteins: P, T, L and H. The cofactor is pyridoxal 5'-phosphate.

It carries out the reaction N(6)-[(R)-lipoyl]-L-lysyl-[glycine-cleavage complex H protein] + glycine + H(+) = N(6)-[(R)-S(8)-aminomethyldihydrolipoyl]-L-lysyl-[glycine-cleavage complex H protein] + CO2. Its function is as follows. The glycine cleavage system catalyzes the degradation of glycine. The P protein binds the alpha-amino group of glycine through its pyridoxal phosphate cofactor; CO(2) is released and the remaining methylamine moiety is then transferred to the lipoamide cofactor of the H protein. This is Glycine dehydrogenase (decarboxylating) from Roseobacter denitrificans (strain ATCC 33942 / OCh 114) (Erythrobacter sp. (strain OCh 114)).